The following is a 218-amino-acid chain: Dehydration-responsive element-binding protein 1B (218 aa).

The tract at residues M1–R26 is disordered. The AP2/ERF DNA-binding region spans V32–A95. Residues S131–N151 form a disordered region.

Belongs to the AP2/ERF transcription factor family. ERF subfamily.

The protein localises to the nucleus. Functionally, transcriptional activator that binds specifically to the DNA sequence 5'-[AG]CCGAC-3'. Binding to the C-repeat/DRE element mediates high salinity- and dehydration-inducible transcription. Confers resistance to high salt, cold and drought stress. This Oryza sativa subsp. japonica (Rice) protein is Dehydration-responsive element-binding protein 1B (DREB1B).